Reading from the N-terminus, the 174-residue chain is MLKQWFNVGKIVNTHGVKGEVRVISRTDFPEERYKPGNALYLFLEGKDEPVQVTVSAHRLHKQFHLLQFKEVETLTEAEKLKNALIKVPEDQLSQLAEDEYYFHEIIGCDVFSEDGDLIGKVKEILTPGANDVWVVARPGKKDALIPYIDAVVKEINVADKTIKIHIMEGLLDE.

The PRC barrel domain occupies 98-171; it reads EDEYYFHEII…TIKIHIMEGL (74 aa).

It belongs to the RimM family. As to quaternary structure, binds ribosomal protein uS19.

It localises to the cytoplasm. In terms of biological role, an accessory protein needed during the final step in the assembly of 30S ribosomal subunit, possibly for assembly of the head region. Essential for efficient processing of 16S rRNA. May be needed both before and after RbfA during the maturation of 16S rRNA. It has affinity for free ribosomal 30S subunits but not for 70S ribosomes. This chain is Ribosome maturation factor RimM, found in Bacillus licheniformis (strain ATCC 14580 / DSM 13 / JCM 2505 / CCUG 7422 / NBRC 12200 / NCIMB 9375 / NCTC 10341 / NRRL NRS-1264 / Gibson 46).